The sequence spans 492 residues: Excitatory amino acid transporter (492 aa).

Over 1–7 (MVSWIRK) the chain is Cytoplasmic. The next 3 helical transmembrane spans lie at 8–28 (NLLL…GFLL), 47–67 (LLMH…LISG), and 85–105 (TYYM…VLVI). Residues 106–191 (HPGDPTIKKE…VKASVEYTSG (86 aa)) are Extracellular-facing. Residues Asn-166 and Asn-176 are each glycosylated (N-linked (GlcNAc...) asparagine). 5 consecutive transmembrane segments (helical) span residues 192–212 (MNVL…SQLG), 228–248 (VIMK…LCLI), 270–290 (VTVL…IFFV), 358–378 (AVAA…GQVV), and 389–409 (IGAA…LTAV).

It belongs to the dicarboxylate/amino acid:cation symporter (DAACS) (TC 2.A.23) family.

Its subcellular location is the membrane. In terms of biological role, transports L-glutamate and also L- and D-aspartate. Essential for terminating the postsynaptic action of glutamate by rapidly removing released glutamate from the synaptic cleft. Acts as a symport by cotransporting sodium. This chain is Excitatory amino acid transporter (GLT-1), found in Onchocerca volvulus.